Consider the following 359-residue polypeptide: 4-hydroxy-3-methylbut-2-en-1-yl diphosphate synthase (flavodoxin) (359 aa).

[4Fe-4S] cluster contacts are provided by Cys-264, Cys-267, Cys-299, and Glu-306.

This sequence belongs to the IspG family. Requires [4Fe-4S] cluster as cofactor.

It catalyses the reaction (2E)-4-hydroxy-3-methylbut-2-enyl diphosphate + oxidized [flavodoxin] + H2O + 2 H(+) = 2-C-methyl-D-erythritol 2,4-cyclic diphosphate + reduced [flavodoxin]. Its pathway is isoprenoid biosynthesis; isopentenyl diphosphate biosynthesis via DXP pathway; isopentenyl diphosphate from 1-deoxy-D-xylulose 5-phosphate: step 5/6. In terms of biological role, converts 2C-methyl-D-erythritol 2,4-cyclodiphosphate (ME-2,4cPP) into 1-hydroxy-2-methyl-2-(E)-butenyl 4-diphosphate. The polypeptide is 4-hydroxy-3-methylbut-2-en-1-yl diphosphate synthase (flavodoxin) (Helicobacter pylori (strain HPAG1)).